Consider the following 84-residue polypeptide: uncharacterized protein (84 aa).

It belongs to the chlamydial CPn_0710/CT_666/TC_0037 family.

This is an uncharacterized protein from Chlamydia pneumoniae (Chlamydophila pneumoniae).